We begin with the raw amino-acid sequence, 674 residues long: MAGVLGSVVFWLIIGIHVTFLVFAQEGDHFVYYDFRNADLELDGMANTNHGPLHLTNNTNTGTGHAFYNIPIKFTASSLSSFSFSTEFVFAIFPLQKSTYGHGMAFVVSPTKDLRSNGSANSNLGIFNRANDNKTATHIFAVELDTNQNSESFDKGGNDVGIDINSIVSVESADASYFNARKGKNISLPLASGKSILVWIDYDGIEKVLNVTLAPVQTPKPDSPYFSSFIKPKVPLLSRSINLSEIFTETMYVGFSGSTGSIKSNQYILGWSFKQGGKAESLDISRLSNPPPSPKRFPLKEVLGATISTIAFLTLGGIVYLYKKKKYAEVLEQWEKEYSPQRYSFRILYKATKGFRENQLLGAGGFGKVYKGILPSGTQIAVKRVYHDAEQGMKQYVAEIASMGRLRHKNLVHLLGYCRRKGELLLVYDYMPNGSLDDYLFHKNKLKDLTWSQRVNIIKGVASALLYLHEEWEQVVLHRDIKASNILLDADLNGKLGDFGLARFHDRGVNLEATRVVGTIGYMAPELTAMGVTTTCTDVYAFGAFILEVVCGRRPVDPDAPREQVILVKWVASCGKRDALTDTVDSKLIDFKVEEAKLLLKLGMLCSQINPENRPSMRQILQYLEGNVSVPAISFGTVALGIPNISHETVTQMTTTSSSANFSFEDVTVLFGGR.

The N-terminal stretch at 1–24 (MAGVLGSVVFWLIIGIHVTFLVFA) is a signal peptide. Topologically, residues 25-301 (QEGDHFVYYD…PSPKRFPLKE (277 aa)) are extracellular. The interval 28 to 274 (DHFVYYDFRN…NQYILGWSFK (247 aa)) is legume-lectin like. Residues Asn-57, Asn-117, Asn-133, Asn-185, Asn-210, and Asn-242 are each glycosylated (N-linked (GlcNAc...) asparagine). The chain crosses the membrane as a helical span at residues 302 to 322 (VLGATISTIAFLTLGGIVYLY). Residues 323-674 (KKKKYAEVLE…EDVTVLFGGR (352 aa)) lie on the Cytoplasmic side of the membrane. Residues 355 to 633 (FRENQLLGAG…LEGNVSVPAI (279 aa)) form the Protein kinase domain. ATP-binding positions include 361–369 (LGAGGFGKV) and Lys-383. Residue Asp-480 is the Proton acceptor of the active site.

The protein in the C-terminal section; belongs to the protein kinase superfamily. Ser/Thr protein kinase family. In the N-terminal section; belongs to the leguminous lectin family.

It localises to the cell membrane. The enzyme catalyses L-seryl-[protein] + ATP = O-phospho-L-seryl-[protein] + ADP + H(+). It catalyses the reaction L-threonyl-[protein] + ATP = O-phospho-L-threonyl-[protein] + ADP + H(+). The chain is Probable L-type lectin-domain containing receptor kinase II.1 (LECRK21) from Arabidopsis thaliana (Mouse-ear cress).